Reading from the N-terminus, the 432-residue chain is Adenylosuccinate synthetase (432 aa).

Residues 13 to 19 (GDEGKGK) and 41 to 43 (GHT) contribute to the GTP site. The active-site Proton acceptor is the aspartate 14. Mg(2+) is bound by residues aspartate 14 and glycine 41. IMP-binding positions include 14–17 (DEGK), 39–42 (NAGH), threonine 130, arginine 144, glutamine 225, threonine 240, and arginine 304. Catalysis depends on histidine 42, which acts as the Proton donor. 300 to 306 (ATTGRRR) contacts substrate. GTP-binding positions include arginine 306, 332 to 334 (KLD), and 415 to 417 (STG).

Belongs to the adenylosuccinate synthetase family. In terms of assembly, homodimer. Mg(2+) is required as a cofactor.

The protein resides in the cytoplasm. The catalysed reaction is IMP + L-aspartate + GTP = N(6)-(1,2-dicarboxyethyl)-AMP + GDP + phosphate + 2 H(+). The protein operates within purine metabolism; AMP biosynthesis via de novo pathway; AMP from IMP: step 1/2. In terms of biological role, plays an important role in the de novo pathway of purine nucleotide biosynthesis. Catalyzes the first committed step in the biosynthesis of AMP from IMP. In Baumannia cicadellinicola subsp. Homalodisca coagulata, this protein is Adenylosuccinate synthetase.